The chain runs to 1029 residues: Toll-like receptor 9 (1029 aa).

A signal peptide spans Met1–Ala24. Topologically, residues Glu25–Asp815 are extracellular. The cysteines at positions 34 and 44 are disulfide-linked. Trp46–Lys50 is a binding site for DNA. 26 LRR repeats span residues Arg61–His84, Ser86–Cys109, Val121–Ser146, Leu149–Leu165, His166–Val189, Leu197–Ser220, Asp222–Asn241, Leu242–Cys267, Leu282–Gly305, Gly307–Asp331, Leu332–Leu355, Leu362–Ser385, Leu389–Ala412, Pro414–Val439, Cys469–Arg492, Ser494–Pro517, Leu518–Glu541, Pro543–Ala570, Leu572–Ala596, Leu598–Cys620, Leu625–Asn648, Pro650–Val673, Leu674–Pro697, Ile699–Arg721, Ala722–Ser745, and Ala747–Asp770. Asn63 is a glycosylation site (N-linked (GlcNAc...) asparagine). Residues Ser71–His76 and Lys94–Pro108 contribute to the DNA site. The cysteines at positions 97 and 109 are disulfide-linked. An N-linked (GlcNAc...) asparagine glycan is attached at Asn128. DNA is bound at residue Tyr131. A disulfide bridge links Cys177 with Cys183. Tyr178 to Met180 is a DNA binding site. An N-linked (GlcNAc...) asparagine glycan is attached at Asn199. Tyr207 contributes to the DNA binding site. Residues Asn209 and Asn241 are each glycosylated (N-linked (GlcNAc...) asparagine). 2 disulfide bridges follow: Cys254–Cys267 and Cys257–Cys264. Cys257 carries the S-palmitoyl cysteine lipid modification. Residue Arg261 coordinates DNA. Cys264 carries the S-palmitoyl cysteine lipid modification. Residues Asn339 and Asn380 are each glycosylated (N-linked (GlcNAc...) asparagine). Cysteines 469 and 498 form a disulfide. Asn472 and Asn511 each carry an N-linked (GlcNAc...) asparagine glycan. Asn565 carries an N-linked (GlcNAc...) asparagine glycan. N-linked (GlcNAc...) asparagine glycosylation is found at Asn667 and Asn692. Asn729 is a glycosylation site (N-linked (GlcNAc...) asparagine). Cystine bridges form between Cys762/Cys788 and Cys764/Cys807. A helical membrane pass occupies residues Cys816–Leu836. Residues Cys837–Glu1029 are Cytoplasmic-facing. The TIR domain occupies Leu864 to Leu1009.

It belongs to the Toll-like receptor family. In terms of assembly, monomer and homodimer. Exists as a monomer in the absence of unmethylated cytidine-phosphate-guanosine (CpG) ligand. Proteolytic processing of an insertion loop (Z-loop) is required for homodimerization upon binding to the unmethylated CpG ligand leading to its activation. Interacts with MYD88 via their respective TIR domains. Interacts with BTK. Interacts (via transmembrane domain) with UNC93B1. Interacts with CD300LH; the interaction may promote full activation of TLR9-triggered innate responses. Interacts with CNPY3 and HSP90B1; this interaction is required for proper folding in the endoplasmic reticulum. Interacts with SMPDL3B. Interacts with CD82; this interaction is essential for TLR9-dependent myddosome formation in response to CpG stimulation. In terms of processing, activated by proteolytic cleavage of the flexible loop between repeats LRR14 and LRR15 within the ectodomain. Cleavage requires UNC93B1. Proteolytically processed by first removing the majority of the ectodomain by either asparagine endopeptidase (AEP) or a cathepsin followed by a trimming event that is solely cathepsin mediated and required for optimal receptor signaling. Post-translationally, palmitoylated by ZDHHC3 in the Golgi regulates TLR9 trafficking from the Golgi to endosomes. Depalmitoylation by PPT1 controls the release of TLR9 from UNC93B1 in endosomes.

Its subcellular location is the endoplasmic reticulum membrane. It is found in the endosome. The protein localises to the lysosome. It localises to the cytoplasmic vesicle. The protein resides in the phagosome. Its function is as follows. Key component of innate and adaptive immunity. TLRs (Toll-like receptors) control host immune response against pathogens through recognition of molecular patterns specific to microorganisms. TLR9 is a nucleotide-sensing TLR which is activated by unmethylated cytidine-phosphate-guanosine (CpG) dinucleotides. Acts via MYD88 and TRAF6, leading to NF-kappa-B activation, cytokine secretion and the inflammatory response. Upon CpG stimulation, induces B-cell proliferation, activation, survival and antibody production. The polypeptide is Toll-like receptor 9 (TLR9) (Bos taurus (Bovine)).